A 257-amino-acid chain; its full sequence is Protein THYLAKOID ASSEMBLY 8-like, chloroplastic (257 aa).

The N-terminal 55 residues, 1–55, are a transit peptide targeting the chloroplast; the sequence is MTAIRVCSRKFPTFASIFFQNITRNPSIHRISFSNLKPKTLLHPIPPKPFTVFVS. PPR repeat units follow at residues 142–176 and 177–211; these read DVFM…NLFP and DSQT…PDPP.

This sequence belongs to the PPR family. P subfamily.

The protein resides in the plastid. It is found in the chloroplast. Binds weakly to specific single strand RNA (ssRNA). The polypeptide is Protein THYLAKOID ASSEMBLY 8-like, chloroplastic (Arabidopsis thaliana (Mouse-ear cress)).